The primary structure comprises 135 residues: RxLR effector protein PITG_02860 (135 aa).

Residues 1–18 form the signal peptide; that stretch reads MRLAFLLLAVSHFICGNA. The RxLR-dEER signature appears at 48 to 64; the sequence is RKLLRTDERLSEANEER. The interval 126 to 135 is NRL1-binding domain; it reads LKDPQAFRGP.

The protein belongs to the RxLR effector family. In terms of assembly, interacts with host ubiquitin E3 ligase NRL1.

The protein resides in the secreted. The protein localises to the host cytoplasm. Its subcellular location is the host nucleus. It is found in the host nucleoplasm. Functionally, effector that promotes P.infestans virulence and suppresses pattern-triggered immunity (PTI). Interacts with the host ubiquitin E3 ligase NRL1 and enhances the association between NRL1 and SWAP70 to promote proteasome-mediated degradation of SWAP70, which results in the suppression of immunity. This Phytophthora infestans (strain T30-4) (Potato late blight agent) protein is RxLR effector protein PITG_02860.